The following is a 63-amino-acid chain: Small ribosomal subunit protein bS21 (63 aa).

It belongs to the bacterial ribosomal protein bS21 family.

This chain is Small ribosomal subunit protein bS21, found in Bacteroides fragilis (strain ATCC 25285 / DSM 2151 / CCUG 4856 / JCM 11019 / LMG 10263 / NCTC 9343 / Onslow / VPI 2553 / EN-2).